Reading from the N-terminus, the 325-residue chain is Biotin synthase (325 aa).

Positions 42 to 270 (YKVQLASLLS…QSRVRLSAGR (229 aa)) constitute a Radical SAM core domain. Residues C57, C61, and C64 each coordinate [4Fe-4S] cluster. [2Fe-2S] cluster contacts are provided by C101, C133, C193, and R265.

It belongs to the radical SAM superfamily. Biotin synthase family. Homodimer. [4Fe-4S] cluster serves as cofactor. It depends on [2Fe-2S] cluster as a cofactor.

The catalysed reaction is (4R,5S)-dethiobiotin + (sulfur carrier)-SH + 2 reduced [2Fe-2S]-[ferredoxin] + 2 S-adenosyl-L-methionine = (sulfur carrier)-H + biotin + 2 5'-deoxyadenosine + 2 L-methionine + 2 oxidized [2Fe-2S]-[ferredoxin]. Its pathway is cofactor biosynthesis; biotin biosynthesis; biotin from 7,8-diaminononanoate: step 2/2. In terms of biological role, catalyzes the conversion of dethiobiotin (DTB) to biotin by the insertion of a sulfur atom into dethiobiotin via a radical-based mechanism. The chain is Biotin synthase from Synechococcus sp. (strain WH7803).